The primary structure comprises 316 residues: Retinol dehydrogenase 12 (316 aa).

46–52 (GANTGIG) lines the NADP(+) pocket. Position 175 (serine 175) interacts with substrate. Tyrosine 200 serves as the catalytic Proton acceptor.

It belongs to the short-chain dehydrogenases/reductases (SDR) family. In terms of tissue distribution, expressed in the inner segments of the photoreceptor in retina.

It carries out the reaction all-trans-retinol + NADP(+) = all-trans-retinal + NADPH + H(+). The enzyme catalyses 11-cis-retinol + NADP(+) = 11-cis-retinal + NADPH + H(+). It catalyses the reaction 9-cis-retinol + NADP(+) = 9-cis-retinal + NADPH + H(+). The catalysed reaction is a 4-hydroxynonen-1-ol + NADP(+) = a 4-hydroxynonenal + NADPH + H(+). It carries out the reaction (E)-non-2-en-1-ol + NADP(+) = (E)-non-2-enal + NADPH + H(+). The enzyme catalyses (Z)-non-6-en-1-ol + NADP(+) = (Z)-non-6-enal + NADPH + H(+). It catalyses the reaction nonan-1-ol + NADP(+) = nonanal + NADPH + H(+). It functions in the pathway cofactor metabolism; retinol metabolism. Its function is as follows. Retinoids dehydrogenase/reductase with a clear preference for NADP. Displays high activity towards 9-cis, 11-cis and all-trans-retinal. Shows very weak activity toward 13-cis-retinol. Also exhibits activity, albeit with lower affinity than for retinaldehydes, towards lipid peroxidation products (C9 aldehydes) such as 4-hydroxynonenal and trans-2-nonenal. Plays an important function in photoreceptor cells to detoxify 4-hydroxynonenal and potentially other toxic aldehyde products resulting from lipid peroxidation. Has no dehydrogenase activity towards steroids. This is Retinol dehydrogenase 12 (Rdh12) from Mus musculus (Mouse).